A 468-amino-acid chain; its full sequence is Acyltransferase R4 (468 aa).

A run of 7 helical transmembrane segments spans residues G21–D41, L70–F90, L133–F153, F252–W272, D308–W328, F388–W408, and I423–F443.

Belongs to the acyltransferase 3 family.

It is found in the membrane. It functions in the pathway secondary metabolite biosynthesis. In terms of biological role, acyltransferase; part of the gene cluster that mediates the biosynthesis of squalestatin S1 (SQS1, also known as zaragozic acid A), a heavily oxidized fungal polyketide that offers potent cholesterol lowering activity by targeting squalene synthase (SS). SQS1 is composed of a 2,8-dioxobicyclic[3.2.1]octane-3,4,5-tricarboxyclic acid core that is connected to two lipophilic polyketide arms. These initial steps feature the priming of an unusual benzoic acid starter unit onto the highly reducing polyketide synthase pks2, followed by oxaloacetate extension and product release to generate a tricarboxylic acid containing product. The phenylalanine ammonia lyase (PAL) M7 and the acyl-CoA ligase M9 are involved in transforming phenylalanine into benzoyl-CoA. The citrate synthase-like protein R3 is involved in connecting the C-alpha-carbons of the hexaketide chain and oxaloacetate to afford the tricarboxylic acid unit. The potential hydrolytic enzymes, M8 and M10, are in close proximity to pks2 and may participate in product release. On the other side, the tetraketide arm is synthesized by a the squalestatin tetraketide synthase pks1 and enzymatically esterified to the core in the last biosynthetic step, by the acetyltransferase M4. The biosynthesis of the tetraketide must involve 3 rounds of chain extension. After the first and second rounds methyl-transfer occurs, and in all rounds of extension the ketoreductase and dehydratase are active. The enoyl reductase and C-MeT of pks1 are not active in the final round of extension. The acetyltransferase M4 appears to have a broad substrate selectivity for its acyl CoA substrate, allowing the in vitro synthesis of novel squalestatins. The biosynthesis of SQS1 requires several oxidative steps likely performed by oxidoreductases M1, R1 and R2. Finally, in support of the identification of the cluster as being responsible for SQS1 production, the cluster contains a gene encoding a putative squalene synthase (SS) R6, suggesting a likely mechanism for self-resistance. This chain is Acyltransferase R4, found in Phoma sp. (strain ATCC 20986 / MF5453).